We begin with the raw amino-acid sequence, 138 residues long: Large ribosomal subunit protein uL16 (138 aa).

Positions 1–16 (MLIPRKVAHRKQHHPG) are enriched in basic residues. The interval 1–24 (MLIPRKVAHRKQHHPGRTGAAKGG) is disordered.

This sequence belongs to the universal ribosomal protein uL16 family. Part of the 50S ribosomal subunit.

Binds 23S rRNA and is also seen to make contacts with the A and possibly P site tRNAs. The chain is Large ribosomal subunit protein uL16 from Frankia alni (strain DSM 45986 / CECT 9034 / ACN14a).